We begin with the raw amino-acid sequence, 645 residues long: Mediator of RNA polymerase II transcription subunit 17 (645 aa).

The interval 215 to 234 is disordered; the sequence is KAEDEESGSPPASPSGSGAA. The segment covering 222 to 234 has biased composition (low complexity); that stretch reads GSPPASPSGSGAA.

It belongs to the Mediator complex subunit 17 family. As to quaternary structure, component of the Mediator complex.

It localises to the nucleus. Component of the Mediator complex, a coactivator involved in the regulated transcription of nearly all RNA polymerase II-dependent genes. Mediator functions as a bridge to convey information from gene-specific regulatory proteins to the basal RNA polymerase II transcription machinery. Mediator is recruited to promoters by direct interactions with regulatory proteins and serves as a scaffold for the assembly of a functional preinitiation complex with RNA polymerase II and the general transcription factors. This is Mediator of RNA polymerase II transcription subunit 17 (MED17) from Anopheles gambiae (African malaria mosquito).